The primary structure comprises 134 residues: Thioredoxin-like protein Clot (134 aa).

Positions 1–134 (MTLKKVDANP…LILPLLAPST (134 aa)) constitute a Thioredoxin domain. Residues Cys48 and Cys51 each act as nucleophile in the active site. An intrachain disulfide couples Cys48 to Cys51.

The protein belongs to the thioredoxin family.

In terms of biological role, probable thiol-disulfide oxidoreductase that may participate in various redox reactions. This chain is Thioredoxin-like protein Clot, found in Arabidopsis thaliana (Mouse-ear cress).